Consider the following 312-residue polypeptide: MDIIFYHPTFDTQWWIEALRKAIPQARVRAWKSGDNDSADYALVWHPPVEMLAGRDLKAVFALGAGVDSILSKLQAHPEMLKPSVPLFRLEDTGMGEQMQEYAVSQVLHWFRRFDDYRIQQNSSHWQPLPEYHREDFTIGILGAGVLGSKVAQSLQTWRFPLRCWSRTRKSWPGVQSFAGREELSAFLSQCRVLINLLPNTPETVGIINQQLLEKLPDGAYLLNLARGVHVVEDDLLAALDSGKVKGAMLDVFNREPLPPESPLWQHPRVTITPHVAAITRPAEAVEYISRTIAQLEKGERVCGQVDRARGY.

The active site involves Arg227. Residue His275 is the Proton donor of the active site.

It belongs to the D-isomer specific 2-hydroxyacid dehydrogenase family. GhrA subfamily.

It is found in the cytoplasm. The enzyme catalyses glycolate + NADP(+) = glyoxylate + NADPH + H(+). The catalysed reaction is (R)-glycerate + NAD(+) = 3-hydroxypyruvate + NADH + H(+). It carries out the reaction (R)-glycerate + NADP(+) = 3-hydroxypyruvate + NADPH + H(+). Its function is as follows. Catalyzes the NADPH-dependent reduction of glyoxylate and hydroxypyruvate into glycolate and glycerate, respectively. The protein is Glyoxylate/hydroxypyruvate reductase A of Escherichia coli (strain ATCC 8739 / DSM 1576 / NBRC 3972 / NCIMB 8545 / WDCM 00012 / Crooks).